A 191-amino-acid polypeptide reads, in one-letter code: RNA pyrophosphohydrolase (191 aa).

The Nudix hydrolase domain occupies 6–149 (GYRLNVGIIL…KREVYRQALS (144 aa)). The Nudix box motif lies at 38–59 (GGIKVDEDPDAAMFRELYEEVG). The tract at residues 162 to 191 (GAQAVSDAGGTATRQIPVATEPSGPSSSQR) is disordered.

Belongs to the Nudix hydrolase family. RppH subfamily. Requires a divalent metal cation as cofactor.

In terms of biological role, accelerates the degradation of transcripts by removing pyrophosphate from the 5'-end of triphosphorylated RNA, leading to a more labile monophosphorylated state that can stimulate subsequent ribonuclease cleavage. This Methylococcus capsulatus (strain ATCC 33009 / NCIMB 11132 / Bath) protein is RNA pyrophosphohydrolase.